The following is a 966-amino-acid chain: Regulator of telomere elongation helicase 1 homolog (966 aa).

In terms of domain architecture, Helicase ATP-binding spans 7–284 (AGIPVHFPFE…QDMAGDEPKD (278 aa)). 42–49 (SPTGTGKT) is a binding site for ATP. 4 residues coordinate [4Fe-4S] cluster: C146, C164, C173, and C209. A DEAH box motif is present at residues 233 to 236 (DEAH). The disordered stretch occupies residues 844–864 (VKIHKRERSSPTAPESTSQVS). Residues 853–863 (SPTAPESTSQV) are compositionally biased toward polar residues. A Phosphothreonine modification is found at T855.

It belongs to the helicase family. RAD3/XPD subfamily.

The protein localises to the nucleus. It carries out the reaction ATP + H2O = ADP + phosphate + H(+). Functionally, a probable ATP-dependent DNA helicase implicated in DNA repair and the maintenance of genomic stability. Acts as an anti-recombinase to counteract toxic recombination and limit crossover during meiosis. Regulates meiotic recombination and crossover homeostasis by physically dissociating strand invasion events and thereby promotes noncrossover repair by meiotic synthesis dependent strand annealing (SDSA) as well as disassembly of D loop recombination intermediates. The protein is Regulator of telomere elongation helicase 1 homolog of Drosophila sechellia (Fruit fly).